Consider the following 297-residue polypeptide: Putative S-adenosyl-L-methionine-dependent methyltransferase MSMEG_0614/MSMEI_0598 (297 aa).

Residues Asp125 and Asp154–Leu155 contribute to the S-adenosyl-L-methionine site.

Belongs to the UPF0677 family.

Functionally, exhibits S-adenosyl-L-methionine-dependent methyltransferase activity. The chain is Putative S-adenosyl-L-methionine-dependent methyltransferase MSMEG_0614/MSMEI_0598 from Mycolicibacterium smegmatis (strain ATCC 700084 / mc(2)155) (Mycobacterium smegmatis).